Reading from the N-terminus, the 391-residue chain is NADH-quinone oxidoreductase subunit D (391 aa).

It belongs to the complex I 49 kDa subunit family. As to quaternary structure, NDH-1 is composed of 14 different subunits. Subunits NuoB, C, D, E, F, and G constitute the peripheral sector of the complex.

It is found in the cell inner membrane. The enzyme catalyses a quinone + NADH + 5 H(+)(in) = a quinol + NAD(+) + 4 H(+)(out). Its function is as follows. NDH-1 shuttles electrons from NADH, via FMN and iron-sulfur (Fe-S) centers, to quinones in the respiratory chain. The immediate electron acceptor for the enzyme in this species is believed to be ubiquinone. Couples the redox reaction to proton translocation (for every two electrons transferred, four hydrogen ions are translocated across the cytoplasmic membrane), and thus conserves the redox energy in a proton gradient. The chain is NADH-quinone oxidoreductase subunit D from Rickettsia rickettsii (strain Sheila Smith).